Here is a 100-residue protein sequence, read N- to C-terminus: Proline-rich protein 15-like protein (100 aa).

The tract at residues 29–51 is disordered; the sequence is YAQTEGGAEPPGPDAGDPHSDFN.

Belongs to the PRR15 family.

The protein is Proline-rich protein 15-like protein (Prr15l) of Mus musculus (Mouse).